The following is a 400-amino-acid chain: MSDIISIKDIDLAKKKIFIRCDFNVPQDDFLNITDDRRIRSAIPTIRYCLDNGCSVILASHLGRPKEISSKYSLEPVSKRLARLLDKEIIMAKDIIGEDAKTKAMNLKAGEILLLENLRFEKGETKNDENLAKELASMVQVYINDAFGVCHRAHSSVEAITKFFDEKHKGAGFLLQKEIDFASNLIKHPARPFVAVVGGSKVSGKLQALTNLLPKVDKLIIGGGMAFTFLKALGYDIGNSLLEEELLEEANKILTKGKNLGVKIYLPVDVVAAPACSQDAPMKFVPVQEIPNGWMGLDIGPASVRLFKEVISDAQTIWWNGPMGVFEIDKFSKGSIKMSHYISEGHATSVVGGGDTADVVARAGDADEMTFISTGGGASLELIEGKELPGVKALRSKENE.

Substrate contacts are provided by residues 22–24, Arg-38, 61–64, Arg-119, and Arg-152; these read DFN and HLGR. ATP-binding positions include Lys-205, Gly-296, Glu-327, and 353–356; that span reads GGDT.

This sequence belongs to the phosphoglycerate kinase family. As to quaternary structure, monomer.

Its subcellular location is the cytoplasm. The catalysed reaction is (2R)-3-phosphoglycerate + ATP = (2R)-3-phospho-glyceroyl phosphate + ADP. The protein operates within carbohydrate degradation; glycolysis; pyruvate from D-glyceraldehyde 3-phosphate: step 2/5. In Campylobacter jejuni subsp. doylei (strain ATCC BAA-1458 / RM4099 / 269.97), this protein is Phosphoglycerate kinase.